The following is a 112-amino-acid chain: Putative pterin-4-alpha-carbinolamine dehydratase (112 aa).

This sequence belongs to the pterin-4-alpha-carbinolamine dehydratase family.

The enzyme catalyses (4aS,6R)-4a-hydroxy-L-erythro-5,6,7,8-tetrahydrobiopterin = (6R)-L-erythro-6,7-dihydrobiopterin + H2O. The chain is Putative pterin-4-alpha-carbinolamine dehydratase from Shewanella amazonensis (strain ATCC BAA-1098 / SB2B).